The following is a 1550-amino-acid chain: MDRNREARRVPMAAAGNGLSRRRHRAGSFRDSPEEEGPVELPEAARLRDRGGSNKKDRDRERDRDRERERERDRERDRLNSRSKRRRGERLMMVHGNLDDGGDDSSEESVNDDEEYDDGGVGPPSSLKMLPPTSNNISAASFSSSLSNHHNGGSGNLHHHHHSHNNNHQRKNNFPPTKVFRSSPSPAPVSPLVSTWKAADEMIGVSVPRKARSACTKRPHESWASSTTGGGVFASGEQIHRQISSTSPANRVSPASILASPSPPAPTSPSSSSISVRKKLPSGTKQKPLPPKSSSSKLSSPVAVQDEIEIEIAEVLYGMMRMPSTSKQEAAGNDLTEAAKSTVEVKSRVSSPISNPQTLPQSSITLAANSSSSNVSAIAPKRKKPRHVKYEDDNSSRVTTIKSEAEAPSKSQVPFSNQLKSSGSGEGNSSVLDSIIPLTRESNASLDSEKKENNLSKDETILPKVESSSGFRSDGEGAKSSSPEKEKFEIDLMAPPPVRSSSERGGEMMECVAAEAKPKVTEVETEAKPLLKEDRSDPAIHDSQEKKRPRMVAEAEHHKFERNCELKLDLDKSDHVGLVNKHHVQKPPPQQQLSVPDKTAQASHLPLHMSMPGWPGGLPTMGYMAPTQGVVPTDTSSLSAAAMQPPPHLLFNQPRPKRCATHCYIARNIQSHQQFTKMNPFWPAAAGSAPMYGTKACNLSLMPPTELQGSVLGRSSNPVQDKNSQSTSKSSETAQRNQLMLQQALPPGAANSILHGPTFIFPLGQQPHAAATIAAASVRPPNSGITSSGPTATSTSMNGSASATPAGAPTMSFSYPAMPGNETQYLAILQNNGYPFPVPAHVGAQPAYRGAPGQPMPFFNGSFYSSQMIQPPHHQPQKQHQQQLTGQMLQSHAPNNQNGSASTGSSAAQKHLQNQQLRPPINHGNSQGFPTHKVQSQPLNFQQRQQPRENATQHSETVGEDSPSTADSRGSRSNVAYGQNYGMQMQPTNLGLMSSPAPGGGVVGSSSSHGEKKSQQQVSKAGVESFQSPGYAMTFATFNGANTAPTLNMSSIAQNHAMFHSMPEAARQGYQMMAAQAAQQKMNYGASLEDGKSGSIGGAATANNTPEEQRKSGGGAIGKTSGGNGGQSIAFSNKQDLADASVSAVTSGSIVDSSSRLLNLGSALPQSSGSLPTSHHQQLLQQQQQQHMQRSQSQQPYTTMYLQKQQRYATSVAASAARTKGPVVSNGSGFPDHNMTTSPAGTTKFANANSGFPQNLVQSSSNQVQSQQWKNNSPRTTNTTQAQSPSMLSPSTSVAAASSLRNIPHKQQSRPQQSQISFAANSKPMTSGSPMQQVQGGTNHQAPSPPMLVGSPSTSSVSKNASGSPRTTASASSAANKGGQASTTTHSASQPSKNLQPASAASSAGGRNNGPSVLGNPTTSSGSKSQQQQQLPKHGLQPQAQLFFSNPYMQAQHQHQQQQITISPSGGYYIQRHQQQSGSAPAVPVTGAVTATSDPAKAIAAASAANNMKGGGGMGKTQQHQLGPPGFTNVHAVSSAVQVKPVDQKQQAGE.

10 disordered regions span residues 1–191 (MDRN…PVSP), 207–304 (VPRK…PVAV), 325–505 (TSKQ…SERG), 708–736 (QGSVLGRSSNPVQDKNSQSTSKSSETAQR), 779–805 (RPPNSGITSSGPTATSTSMNGSASATP), 859–1023 (FNGS…KAGV), 1086–1130 (ASLE…QSIA), 1163–1196 (ALPQSSGSLPTSHHQQLLQQQQQQHMQRSQSQQP), 1213–1296 (AASA…SVAA), and 1321–1435 (NSKP…PKHG). The segment covering 43–80 (EAARLRDRGGSNKKDRDRERDRDRERERERDRERDRLN) has biased composition (basic and acidic residues). Acidic residues predominate over residues 100–118 (DGGDDSSEESVNDDEEYDD). Residues 134 to 151 (SNNISAASFSSSLSNHHN) show a composition bias toward low complexity. Positions 157 to 171 (LHHHHHSHNNNHQRK) are enriched in basic residues. Over residues 241–250 (RQISSTSPAN) the composition is skewed to polar residues. Low complexity predominate over residues 292 to 301 (KSSSSKLSSP). Residues 348–366 (RVSSPISNPQTLPQSSITL) are compositionally biased toward polar residues. Positions 367–379 (AANSSSSNVSAIA) are enriched in low complexity. Residues 409–432 (SKSQVPFSNQLKSSGSGEGNSSVL) show a composition bias toward polar residues. Basic and acidic residues-rich tracts occupy residues 447–461 (DSEKKENNLSKDETI) and 473–490 (SDGEGAKSSSPEKEKFEI). Composition is skewed to polar residues over residues 713–736 (GRSSNPVQDKNSQSTSKSSETAQR), 783–803 (SGITSSGPTATSTSMNGSASA), and 884–992 (LTGQ…NLGL). A compositionally biased stretch (gly residues) spans 1112-1126 (SGGGAIGKTSGGNGG). Positions 1164–1173 (LPQSSGSLPT) are enriched in polar residues. The segment covering 1174 to 1195 (SHHQQLLQQQQQQHMQRSQSQQ) has biased composition (low complexity). A compositionally biased stretch (polar residues) spans 1234 to 1253 (NMTTSPAGTTKFANANSGFP). The segment covering 1254-1273 (QNLVQSSSNQVQSQQWKNNS) has biased composition (low complexity). Composition is skewed to polar residues over residues 1274–1296 (PRTTNTTQAQSPSMLSPSTSVAA), 1321–1342 (NSKPMTSGSPMQQVQGGTNHQA), and 1351–1360 (SPSTSSVSKN). The segment covering 1361–1382 (ASGSPRTTASASSAANKGGQAS) has biased composition (low complexity). 2 stretches are compositionally biased toward polar residues: residues 1383 to 1397 (TTTHSASQPSKNLQP) and 1405 to 1419 (GGRNNGPSVLGNPTT). Residues 1420–1435 (SSGSKSQQQQQLPKHG) show a composition bias toward low complexity.

Interacts with MYC2.

The protein localises to the nucleus. Functionally, regulator of normal clock function. Acts in the mid to late night. Contributes to the amplitude of circadian clocks. May act on the transcriptional induction of LATE ELONGATED HYPOCOTYL (LHY). Inhibits MYC2 protein accumulation, acting as a negative factor in the JA-signaling pathway. In Arabidopsis thaliana (Mouse-ear cress), this protein is Protein TIME FOR COFFEE (TIC).